The chain runs to 77 residues: Small ribosomal subunit protein bS18 (77 aa).

Belongs to the bacterial ribosomal protein bS18 family. Part of the 30S ribosomal subunit. Forms a tight heterodimer with protein bS6.

In terms of biological role, binds as a heterodimer with protein bS6 to the central domain of the 16S rRNA, where it helps stabilize the platform of the 30S subunit. This Bacillus thuringiensis subsp. konkukian (strain 97-27) protein is Small ribosomal subunit protein bS18.